The primary structure comprises 320 residues: Replication factor C small subunit 2 (320 aa).

44 to 51 (GPPGTGKT) lines the ATP pocket.

This sequence belongs to the activator 1 small subunits family. RfcS subfamily. In terms of assembly, heteromultimer composed of small subunits (RfcS) and large subunits (RfcL).

Part of the RFC clamp loader complex which loads the PCNA sliding clamp onto DNA. This chain is Replication factor C small subunit 2, found in Pyrobaculum islandicum (strain DSM 4184 / JCM 9189 / GEO3).